A 443-amino-acid polypeptide reads, in one-letter code: Probable glycine dehydrogenase (decarboxylating) subunit 1 (443 aa).

It belongs to the GcvP family. N-terminal subunit subfamily. The glycine cleavage system is composed of four proteins: P, T, L and H. In this organism, the P 'protein' is a heterodimer of two subunits.

The enzyme catalyses N(6)-[(R)-lipoyl]-L-lysyl-[glycine-cleavage complex H protein] + glycine + H(+) = N(6)-[(R)-S(8)-aminomethyldihydrolipoyl]-L-lysyl-[glycine-cleavage complex H protein] + CO2. Its function is as follows. The glycine cleavage system catalyzes the degradation of glycine. The P protein binds the alpha-amino group of glycine through its pyridoxal phosphate cofactor; CO(2) is released and the remaining methylamine moiety is then transferred to the lipoamide cofactor of the H protein. The chain is Probable glycine dehydrogenase (decarboxylating) subunit 1 from Koribacter versatilis (strain Ellin345).